Consider the following 201-residue polypeptide: Sec-independent protein translocase protein TatB (201 aa).

A helical membrane pass occupies residues 1–21 (MLDLGWSEILVIAVVLIVVVG). The segment at 96–201 (LSEAAKAKPA…RRKKTAGTAP (106 aa)) is disordered. Low complexity-rich tracts occupy residues 102–114 (AKPA…AADS) and 159–187 (TSAK…APAK). A compositionally biased stretch (basic residues) spans 189–201 (PSPRRKKTAGTAP).

It belongs to the TatB family. The Tat system comprises two distinct complexes: a TatABC complex, containing multiple copies of TatA, TatB and TatC subunits, and a separate TatA complex, containing only TatA subunits. Substrates initially bind to the TatABC complex, which probably triggers association of the separate TatA complex to form the active translocon.

It is found in the cell inner membrane. Its function is as follows. Part of the twin-arginine translocation (Tat) system that transports large folded proteins containing a characteristic twin-arginine motif in their signal peptide across membranes. Together with TatC, TatB is part of a receptor directly interacting with Tat signal peptides. TatB may form an oligomeric binding site that transiently accommodates folded Tat precursor proteins before their translocation. In Chelativorans sp. (strain BNC1), this protein is Sec-independent protein translocase protein TatB.